A 101-amino-acid chain; its full sequence is Unclassified hydrophobin dewD (101 aa).

Positions M1–A21 are cleaved as a signal peptide. Intrachain disulfides connect C27–C81, C41–C73, C42–C60, and C82–C91.

As to quaternary structure, self-assembles to form functional amyloid fibrils called rodlets. Self-assembly into fibrillar rodlets occurs spontaneously at hydrophobic:hydrophilic interfaces and the rodlets further associate laterally to form amphipathic monolayers.

The protein resides in the secreted. It is found in the spore wall. Functionally, aerial growth, conidiation, and dispersal of filamentous fungi in the environment rely upon a capability of their secreting small amphipathic proteins called hydrophobins (HPBs) with low sequence identity. Class I can self-assemble into an outermost layer of rodlet bundles on aerial cell surfaces, conferring cellular hydrophobicity that supports fungal growth, development and dispersal; whereas Class II form highly ordered films at water-air interfaces through intermolecular interactions but contribute nothing to the rodlet structure. DewD is an unclassified hydrophobin that contributes to the hydrophobicity of the spore surface. This Emericella nidulans (strain FGSC A4 / ATCC 38163 / CBS 112.46 / NRRL 194 / M139) (Aspergillus nidulans) protein is Unclassified hydrophobin dewD.